The primary structure comprises 591 residues: Probable methyltransferase PMT6 (591 aa).

Topologically, residues methionine 1–glutamine 13 are cytoplasmic. A helical; Signal-anchor for type II membrane protein membrane pass occupies residues threonine 14–threonine 34. Residues asparagine 35–isoleucine 591 lie on the Lumenal side of the membrane. N-linked (GlcNAc...) asparagine glycans are attached at residues asparagine 87, asparagine 99, asparagine 146, asparagine 193, asparagine 323, asparagine 436, asparagine 473, and asparagine 515.

This sequence belongs to the methyltransferase superfamily.

The protein resides in the endoplasmic reticulum membrane. The polypeptide is Probable methyltransferase PMT6 (Arabidopsis thaliana (Mouse-ear cress)).